The following is a 216-amino-acid chain: Protein Syd (216 aa).

It belongs to the Syd family.

The protein resides in the cell inner membrane. In terms of biological role, interacts with the SecY protein in vivo. May bind preferentially to an uncomplexed state of SecY, thus functioning either as a chelating agent for excess SecY in the cell or as a regulatory factor that negatively controls the translocase function. The sequence is that of Protein Syd from Shewanella sp. (strain W3-18-1).